An 855-amino-acid chain; its full sequence is DNA mismatch repair protein MutS (855 aa).

Residue 618-625 (GPNMGGKS) participates in ATP binding.

It belongs to the DNA mismatch repair MutS family.

Functionally, this protein is involved in the repair of mismatches in DNA. It is possible that it carries out the mismatch recognition step. This protein has a weak ATPase activity. This Shewanella loihica (strain ATCC BAA-1088 / PV-4) protein is DNA mismatch repair protein MutS.